The primary structure comprises 421 residues: Autophagy-related protein 17 (421 aa).

Belongs to the ATG17 family. As to quaternary structure, forms a complex with ATG13, ATG29 and CIS1/ATG31. The ATG17-ATG29-ATG31 complex interacts with the ATG1-ATG13 complex. Forms a complex with SNX4 and ATG20. Interacts with ATG11.

It is found in the cytoplasm. The protein resides in the preautophagosomal structure membrane. Its function is as follows. Autophagy-specific protein that functions with ATG13, ATG29, and CIS1/ATG31 in response to autophagy-inducing signals as a scaffold to recruit other ATG proteins to organize pre-autophagosomal structure (PAS) formation. Modulates the timing and magnitude of the autophagy response, such as the size of the sequestering vesicles, through interacting with and regulating ATG1 kinase activity. Plays particularly a role in pexophagy and nucleophagy. With ATG13, is required for ATG1 activation by autophosphorylation. Recruits ATG9 to the pre-autophagosomal structure. This chain is Autophagy-related protein 17, found in Kluyveromyces marxianus (strain DMKU3-1042 / BCC 29191 / NBRC 104275) (Yeast).